The primary structure comprises 485 residues: ATP synthase subunit beta (485 aa).

Residues 1–11 (MPATETADKNT) are compositionally biased toward basic and acidic residues. The disordered stretch occupies residues 1 to 20 (MPATETADKNTKSANSDTSG). Residue 170–177 (GGAGVGKT) participates in ATP binding.

It belongs to the ATPase alpha/beta chains family. F-type ATPases have 2 components, CF(1) - the catalytic core - and CF(0) - the membrane proton channel. CF(1) has five subunits: alpha(3), beta(3), gamma(1), delta(1), epsilon(1). CF(0) has three main subunits: a(1), b(2) and c(9-12). The alpha and beta chains form an alternating ring which encloses part of the gamma chain. CF(1) is attached to CF(0) by a central stalk formed by the gamma and epsilon chains, while a peripheral stalk is formed by the delta and b chains.

The protein localises to the cell membrane. It catalyses the reaction ATP + H2O + 4 H(+)(in) = ADP + phosphate + 5 H(+)(out). Functionally, produces ATP from ADP in the presence of a proton gradient across the membrane. The catalytic sites are hosted primarily by the beta subunits. This Mycobacterium avium (strain 104) protein is ATP synthase subunit beta.